The chain runs to 949 residues: Translation initiation factor IF-2 (949 aa).

Disordered stretches follow at residues 46–82 (LTASRPAESGPEEVRVTTNIVRRRSRPSAAAEPEAEA), 145–176 (EPAVAQEASPAVTAAKPVPATPAAPPQPERAS), and 188–361 (IPIT…KTEL). Over residues 152 to 162 (ASPAVTAAKPV) the composition is skewed to low complexity. Positions 163–172 (PATPAAPPQP) are enriched in pro residues. Residues 263–276 (PRDAAAPRPAGARP) are compositionally biased toward low complexity. A compositionally biased stretch (basic and acidic residues) spans 334–344 (SREERQFDPFH). A tr-type G domain is found at 449 to 618 (ERPPVVTIMG…LLQADLMDLK (170 aa)). A G1 region spans residues 458 to 465 (GHVDHGKT). Residue 458–465 (GHVDHGKT) participates in GTP binding. The G2 stretch occupies residues 483 to 487 (GITQH). Residues 504-507 (DTPG) are G3. GTP contacts are provided by residues 504 to 508 (DTPGH) and 558 to 561 (NKID). The G4 stretch occupies residues 558–561 (NKID). The G5 stretch occupies residues 594-596 (SAK).

This sequence belongs to the TRAFAC class translation factor GTPase superfamily. Classic translation factor GTPase family. IF-2 subfamily.

The protein localises to the cytoplasm. Its function is as follows. One of the essential components for the initiation of protein synthesis. Protects formylmethionyl-tRNA from spontaneous hydrolysis and promotes its binding to the 30S ribosomal subunits. Also involved in the hydrolysis of GTP during the formation of the 70S ribosomal complex. The protein is Translation initiation factor IF-2 of Trichlorobacter lovleyi (strain ATCC BAA-1151 / DSM 17278 / SZ) (Geobacter lovleyi).